The following is a 228-amino-acid chain: HTH-type transcriptional activator FasR (228 aa).

Residues 1–39 (MSDLAKTAQRRALRSSGSARPDEDVPAPNRRGNRLPRDE) form a disordered region. In terms of domain architecture, HTH tetR-type spans 38–98 (DERRGQLLVV…AVLHRHVENL (61 aa)). Positions 61–80 (GMDEIADRAGVSKPVLYQHF) form a DNA-binding region, H-T-H motif.

In terms of assembly, homodimer.

FasR:DNA binding is regulated by long-chain acyl-CoAs (C14- to C26-CoA), which act as effector molecules that modulate the affinity of FasR for its DNA binding sequences and therefore modulate the expression of the essential fas-acpS operon. FasR activity is not affected by mycolic acid biosynthesis intermediates. Transcriptional activator that plays a central role in sensing mycobacterial long-chain fatty acids and regulating lipid biosynthesis. Activates the expression of the genes encoding the fatty acid synthase (fas) and the 4-phosphopantetheinyl transferase (acpS), whose products are involved in the fatty acid and mycolic acid biosynthesis. Specifically binds to three conserved operator sequences present in the fas-acpS promoter region. Not essential for M.tuberculosis viability, although it is required for the optimal growth in vitro and for virulence in macrophages and in a mouse model of infection. The chain is HTH-type transcriptional activator FasR from Mycobacterium tuberculosis (strain ATCC 25618 / H37Rv).